The following is a 215-amino-acid chain: Endonuclease III (215 aa).

A HhH domain is found at 113–132 (REDLESLPGVGRKTANVILN). 4 residues coordinate [4Fe-4S] cluster: Cys-192, Cys-199, Cys-202, and Cys-208.

The protein belongs to the Nth/MutY family. Requires [4Fe-4S] cluster as cofactor.

It catalyses the reaction 2'-deoxyribonucleotide-(2'-deoxyribose 5'-phosphate)-2'-deoxyribonucleotide-DNA = a 3'-end 2'-deoxyribonucleotide-(2,3-dehydro-2,3-deoxyribose 5'-phosphate)-DNA + a 5'-end 5'-phospho-2'-deoxyribonucleoside-DNA + H(+). Functionally, DNA repair enzyme that has both DNA N-glycosylase activity and AP-lyase activity. The DNA N-glycosylase activity releases various damaged pyrimidines from DNA by cleaving the N-glycosidic bond, leaving an AP (apurinic/apyrimidinic) site. The AP-lyase activity cleaves the phosphodiester bond 3' to the AP site by a beta-elimination, leaving a 3'-terminal unsaturated sugar and a product with a terminal 5'-phosphate. This chain is Endonuclease III, found in Buchnera aphidicola subsp. Baizongia pistaciae (strain Bp).